A 236-amino-acid polypeptide reads, in one-letter code: Small ribosomal subunit protein uS2c (236 aa).

The protein belongs to the universal ribosomal protein uS2 family.

The protein localises to the plastid. The protein resides in the chloroplast. This is Small ribosomal subunit protein uS2c (rps2) from Populus alba (White poplar).